The sequence spans 470 residues: MKNFLCEDFLLSNETARRLYHEHACHQPIYDYHCHLNPAEVAQNRQFDNLGQIWLEGDHYKWRGMRSAGIEERLITGDASDYDKYMAWAKTVPQTLGNPLYHWTHLELRRPFGITNTLFSPDTADQIWHQCNELLATPEFTARGIMQQMNVVMAGTTDDPIDSLKHHKTIAEDDTFNVKVLPSWRPDKAFKIELDLFADYMHKLGEVADIEIRRFDDLLSALDKRLAHFDAHGCRAADHGIEIVRYAPIPSEADLDVLLARRLNGEVLSELECAQFSTAVQVWLGKRYAQLGWVMQLHIGAQRNNSTRMFQLLGADAGFDSIGDRPFAFELAHLLDEMDQTNELPRTILYCLNPRDNEMMATMIGNFQGGGIAGKVQFGSGWWFNDQKDGMQRQMEQLSQLGLLSQFVGMLTDSRSFLSYTRHEYFRRILCDMVGRWAENGEVPNDLSLLGPMVEDICFGNAKRYFEERV.

It belongs to the metallo-dependent hydrolases superfamily. Uronate isomerase family.

It carries out the reaction D-glucuronate = D-fructuronate. The enzyme catalyses aldehydo-D-galacturonate = keto-D-tagaturonate. Its pathway is carbohydrate metabolism; pentose and glucuronate interconversion. The polypeptide is Uronate isomerase (Vibrio vulnificus (strain CMCP6)).